Here is a 168-residue protein sequence, read N- to C-terminus: uncharacterized protein (168 aa).

2 helical membrane passes run 27–47 (NWLV…RISG) and 147–167 (IENG…QVMF).

It is found in the membrane. This is an uncharacterized protein from Saccharomyces cerevisiae (strain ATCC 204508 / S288c) (Baker's yeast).